The primary structure comprises 235 residues: Putative quercetin 2,3-dioxygenase ZMO1337 (235 aa).

Residues His57, His59, His101, and Glu103 each contribute to the a divalent metal cation site.

The protein belongs to the pirin family. A divalent metal cation serves as cofactor.

It catalyses the reaction quercetin + O2 = 2-(3,4-dihydroxybenzoyloxy)-4,6-dihydroxybenzoate + CO. Its pathway is flavonoid metabolism; quercetin degradation. Putative quercetin 2,3-dioxygenase. In Zymomonas mobilis subsp. mobilis (strain ATCC 31821 / ZM4 / CP4), this protein is Putative quercetin 2,3-dioxygenase ZMO1337.